The chain runs to 300 residues: uncharacterized protein (300 aa).

Positions 67-179 (LAFEELEKEK…IAKANELKDS (113 aa)) form a coiled coil. Low complexity predominate over residues 203–285 (STTASLSQSE…PSSQSTYQQQ (83 aa)). The segment at 203–300 (STTASLSQSE…KGFFARLFNL (98 aa)) is disordered.

This is an uncharacterized protein from Staphylococcus epidermidis (strain ATCC 12228 / FDA PCI 1200).